An 873-amino-acid polypeptide reads, in one-letter code: Aminopeptidase M1-D (873 aa).

The segment at 96–203 (LGEGVLAMRF…MSTYLVAIVV (108 aa)) is required for membrane association. Residues Glu136 and 269-273 (GAMEN) contribute to the substrate site. His305 contacts Zn(2+). Glu306 acts as the Proton acceptor in catalysis. Residues His309 and Glu328 each coordinate Zn(2+). A Dileucine internalization motif motif is present at residues 721 to 722 (LL).

This sequence belongs to the peptidase M1 family. Homodimer. The cofactor is Zn(2+).

The protein resides in the membrane. It is found in the microsome membrane. The protein localises to the cytoplasm. The catalysed reaction is Release of an N-terminal amino acid, Xaa-|-Yaa- from a peptide, amide or arylamide. Xaa is preferably Ala, but may be most amino acids including Pro (slow action). When a terminal hydrophobic residue is followed by a prolyl residue, the two may be released as an intact Xaa-Pro dipeptide.. The sequence is that of Aminopeptidase M1-D from Oryza sativa subsp. japonica (Rice).